Here is a 423-residue protein sequence, read N- to C-terminus: uncharacterized protein (423 aa).

This sequence belongs to the asfivirus E423R family.

It is found in the virion. This is an uncharacterized protein from African swine fever virus (isolate Tick/Malawi/Lil 20-1/1983) (ASFV).